The sequence spans 763 residues: Eukaryotic translation initiation factor 3 subunit B (763 aa).

The tract at residues 1-136 (MKNFLPRTLK…LFVECGSMND (136 aa)) is sufficient for interaction with HCR1 and TIF32. The segment at 28 to 261 (RNTQLKRSKI…GVTAWGGPNF (234 aa)) is sufficient for interaction with PIC8. Serine 61 is modified (phosphoserine). Tyrosine 67 bears the Phosphotyrosine mark. The 86-residue stretch at 77-162 (QYIVVNGAPV…HRLFLYTMKD (86 aa)) folds into the RRM domain. 6 WD repeats span residues 228 to 266 (RENW…RLRR), 277 to 325 (VSPN…LMAT), 373 to 416 (LKPS…SACT), 484 to 524 (ELKD…IRFY), 544 to 589 (IPKT…EKNI), and 605 to 650 (PTYS…VKED). Serine 669 carries the post-translational modification Phosphoserine.

Belongs to the eIF-3 subunit B family. As to quaternary structure, the eukaryotic translation initiation factor 3 (eIF-3) core complex is composed of TIF32, PRT1, NIP1, TIF34 and TIF35. A subcomplex of TIF32, NIP1 and PRT1 mediates the interaction with eIF-1, TIF5/eIF-5 and HCR1. The factors eIF-1, eIF-2, eIF-3, TIF5/eIF-5 and methionyl-tRNAi form a multifactor complex (MFC) that may bind to the 40S ribosome.

It is found in the cytoplasm. RNA-binding component of the eukaryotic translation initiation factor 3 (eIF-3) complex, which is involved in protein synthesis of a specialized repertoire of mRNAs and, together with other initiation factors, stimulates binding of mRNA and methionyl-tRNAi to the 40S ribosome. The eIF-3 complex specifically targets and initiates translation of a subset of mRNAs involved in cell proliferation. This is Eukaryotic translation initiation factor 3 subunit B from Saccharomyces cerevisiae (strain ATCC 204508 / S288c) (Baker's yeast).